A 278-amino-acid polypeptide reads, in one-letter code: Bis(5'-nucleosyl)-tetraphosphatase, symmetrical (278 aa).

Belongs to the Ap4A hydrolase family.

The enzyme catalyses P(1),P(4)-bis(5'-adenosyl) tetraphosphate + H2O = 2 ADP + 2 H(+). In terms of biological role, hydrolyzes diadenosine 5',5'''-P1,P4-tetraphosphate to yield ADP. The polypeptide is Bis(5'-nucleosyl)-tetraphosphatase, symmetrical (Buchnera aphidicola subsp. Baizongia pistaciae (strain Bp)).